The following is a 208-amino-acid chain: Ribonuclease HII (208 aa).

An RNase H type-2 domain is found at 12–201; that stretch reads ELVAGVDEVG…VRALLEPVAV (190 aa). Asp18, Glu19, and Asp110 together coordinate a divalent metal cation.

It belongs to the RNase HII family. It depends on Mn(2+) as a cofactor. The cofactor is Mg(2+).

Its subcellular location is the cytoplasm. It catalyses the reaction Endonucleolytic cleavage to 5'-phosphomonoester.. In terms of biological role, endonuclease that specifically degrades the RNA of RNA-DNA hybrids. In Ectopseudomonas mendocina (strain ymp) (Pseudomonas mendocina), this protein is Ribonuclease HII.